Here is a 144-residue protein sequence, read N- to C-terminus: Large ribosomal subunit protein uL13 (144 aa).

It belongs to the universal ribosomal protein uL13 family. Part of the 50S ribosomal subunit.

In terms of biological role, this protein is one of the early assembly proteins of the 50S ribosomal subunit, although it is not seen to bind rRNA by itself. It is important during the early stages of 50S assembly. The protein is Large ribosomal subunit protein uL13 of Mycoplasmopsis agalactiae (strain NCTC 10123 / CIP 59.7 / PG2) (Mycoplasma agalactiae).